The sequence spans 246 residues: UDP-N-acetyl-D-mannosaminuronic acid transferase (246 aa).

The protein belongs to the glycosyltransferase 26 family.

It carries out the reaction UDP-N-acetyl-alpha-D-mannosaminouronate + N-acetyl-alpha-D-glucosaminyl-di-trans,octa-cis-undecaprenyl diphosphate = beta-D-ManNAcA-(1-&gt;4)-alpha-D-GlcNAc-di-trans,octa-cis-undecaprenyl diphosphate + UDP + H(+). It participates in bacterial outer membrane biogenesis; enterobacterial common antigen biosynthesis. In terms of biological role, catalyzes the synthesis of Und-PP-GlcNAc-ManNAcA (Lipid II), the second lipid-linked intermediate involved in enterobacterial common antigen (ECA) synthesis. This is UDP-N-acetyl-D-mannosaminuronic acid transferase from Salmonella dublin (strain CT_02021853).